Reading from the N-terminus, the 595-residue chain is uncharacterized protein (595 aa).

The N-terminal stretch at 1-23 (MLSLSSPPWLLLLVLFFFANGSA) is a signal peptide. N-linked (GlcNAc...) asparagine glycosylation is found at Asn31, Asn63, Asn88, Asn112, Asn144, Asn187, Asn205, Asn389, Asn480, Asn492, and Asn506. A compositionally biased stretch (polar residues) spans 61-83 (LENQTASSSNLNTNNEASDEQTG). 2 disordered regions span residues 61-119 (LENQ…VSSL) and 141-164 (TALN…TKGE). Over residues 84-119 (NSNSNTSSHSRNINGLPSSNSNIDNANSNSSSVSSL) the composition is skewed to low complexity.

It is found in the secreted. This is an uncharacterized protein from Drosophila melanogaster (Fruit fly).